The chain runs to 212 residues: Maleylpyruvate isomerase (212 aa).

Residues 1-80 enclose the GST N-terminal domain; it reads MKLYNFWRSG…WLEEQYPTPA (80 aa). Residues 9–11, His-38, Val-52, 64–65, 102–104, 108–110, and Arg-176 contribute to the glutathione site; these read SGT, QS, DIH, and NRR. The GST C-terminal domain occupies 85 to 212; sequence DADGRQRVRA…AAPAAQPDSA (128 aa).

Belongs to the GST superfamily. Zeta family. As to quaternary structure, homodimer. It depends on glutathione as a cofactor.

It carries out the reaction 3-maleylpyruvate = 3-fumarylpyruvate. It functions in the pathway aromatic compound metabolism; naphthalene degradation. In terms of biological role, catalyzes the GSH-dependent isomerization of maleylpyruvate to fumarylpyruvate which is subsequently processed by NagK to form pyruvate and fumarate. The polypeptide is Maleylpyruvate isomerase (Ralstonia sp).